The primary structure comprises 50 residues: Omega-conotoxin Bu8 (50 aa).

Residue alanine 1 is a signal peptide. Positions 2-24 are excised as a propeptide; that stretch reads EDSRGTQLHRALRKATKLSESTR. Disulfide bonds link cysteine 25-cysteine 40, cysteine 32-cysteine 44, and cysteine 39-cysteine 49. Cysteine 49 is subject to Cysteine amide.

The protein belongs to the conotoxin O1 superfamily. In terms of tissue distribution, expressed by the venom duct.

The protein localises to the secreted. Omega-conotoxins act at presynaptic membranes, they bind and block voltage-gated calcium channels (Cav). This toxin selectively and potently inhibits depolarization-activated rat Cav2.2/CACNA1B currents (IC(50)=89 nM), when coexpressed with alpha-2/delta-1 (CACNA2D1) and beta-3 (CACNB3) subunits. In vivo, is lethal to fish and displays potent analgesic activity in mice pain models of hot plate and acetic acid writhing but has fewer side effects on mouse motor function and lower toxicity in goldfish. Shows higher or similar analgesic activity in the pain models mentioned above compared to MVIIA, and lower side effects. In addition, it blocks Cav2.2/CACNA1B more rapidly than MVIIA and also dissociates more rapidly. In Conus bullatus (Bubble cone), this protein is Omega-conotoxin Bu8.